An 86-amino-acid polypeptide reads, in one-letter code: Putative membrane protein insertion efficiency factor (86 aa).

Positions 67–86 (LHEGGDDPVPPVKNNDNREH) are disordered.

The protein belongs to the UPF0161 family.

It is found in the cell inner membrane. Could be involved in insertion of integral membrane proteins into the membrane. This is Putative membrane protein insertion efficiency factor from Photorhabdus laumondii subsp. laumondii (strain DSM 15139 / CIP 105565 / TT01) (Photorhabdus luminescens subsp. laumondii).